The sequence spans 446 residues: Na(+)-translocating NADH-quinone reductase subunit A (446 aa).

It belongs to the NqrA family. Composed of six subunits; NqrA, NqrB, NqrC, NqrD, NqrE and NqrF.

The catalysed reaction is a ubiquinone + n Na(+)(in) + NADH + H(+) = a ubiquinol + n Na(+)(out) + NAD(+). In terms of biological role, NQR complex catalyzes the reduction of ubiquinone-1 to ubiquinol by two successive reactions, coupled with the transport of Na(+) ions from the cytoplasm to the periplasm. NqrA to NqrE are probably involved in the second step, the conversion of ubisemiquinone to ubiquinol. The sequence is that of Na(+)-translocating NADH-quinone reductase subunit A from Histophilus somni (strain 2336) (Haemophilus somnus).